We begin with the raw amino-acid sequence, 145 residues long: 3-hydroxyacyl-[acyl-carrier-protein] dehydratase FabZ (145 aa).

The active site involves His-49.

Belongs to the thioester dehydratase family. FabZ subfamily.

It is found in the cytoplasm. It catalyses the reaction a (3R)-hydroxyacyl-[ACP] = a (2E)-enoyl-[ACP] + H2O. In terms of biological role, involved in unsaturated fatty acids biosynthesis. Catalyzes the dehydration of short chain beta-hydroxyacyl-ACPs and long chain saturated and unsaturated beta-hydroxyacyl-ACPs. The polypeptide is 3-hydroxyacyl-[acyl-carrier-protein] dehydratase FabZ (Rickettsia peacockii (strain Rustic)).